A 591-amino-acid chain; its full sequence is Probable LRR receptor-like serine/threonine-protein kinase At1g69990 (591 aa).

A signal peptide spans 1–18 (MKTISIFFVIILMSSSHA). Residues 19-218 (EDDVLCLKGF…GKNLTIIVTA (200 aa)) are Extracellular-facing. Asparagine 46 carries an N-linked (GlcNAc...) asparagine glycan. LRR repeat units lie at residues 66–88 (RILS…LKLC), 90–111 (SLQS…QICS), 115–137 (YLVT…IVDC), 139–162 (FLNS…TRLN), and 163–185 (RLQR…LSHY). Asparagine 211 is a glycosylation site (N-linked (GlcNAc...) asparagine). The helical transmembrane segment at 219-239 (GVIGAVGSLCVGFGMFWWFFI) threads the bilayer. Residues 240 to 591 (RDRRKMNNYG…LIFNKQEHLK (352 aa)) are Cytoplasmic-facing. Threonine 292 carries the post-translational modification Phosphothreonine. A Protein kinase domain is found at 295-573 (FDSGNIVVSS…KNLGDQHGFF (279 aa)). ATP-binding positions include 301–309 (VVSSRSGVS) and lysine 323. At serine 378 the chain carries Phosphoserine. At threonine 389 the chain carries Phosphothreonine. Tyrosine 463 carries the post-translational modification Phosphotyrosine. Serine 465 carries the phosphoserine modification. Threonine 466 is subject to Phosphothreonine. At serine 470 the chain carries Phosphoserine.

Belongs to the protein kinase superfamily. Ser/Thr protein kinase family.

The protein resides in the membrane. It catalyses the reaction L-seryl-[protein] + ATP = O-phospho-L-seryl-[protein] + ADP + H(+). The catalysed reaction is L-threonyl-[protein] + ATP = O-phospho-L-threonyl-[protein] + ADP + H(+). This chain is Probable LRR receptor-like serine/threonine-protein kinase At1g69990, found in Arabidopsis thaliana (Mouse-ear cress).